A 492-amino-acid polypeptide reads, in one-letter code: Aspartate aminotransferase (492 aa).

The transit peptide at 1–66 directs the protein to the chloroplast; that stretch reads MMSASFKCPV…KGSCCLFNIR (66 aa). L-aspartate contacts are provided by Gly-119, Trp-206, and Asn-256. Lys-319 bears the N6-(pyridoxal phosphate)lysine mark. Arg-458 is an L-aspartate binding site.

This sequence belongs to the class-I pyridoxal-phosphate-dependent aminotransferase family. In terms of assembly, homodimer. Pyridoxal 5'-phosphate is required as a cofactor.

It localises to the plastid. It is found in the chloroplast. The enzyme catalyses L-aspartate + 2-oxoglutarate = oxaloacetate + L-glutamate. Prokaryotic-type aspartate aminotransferase. Specific for aspartate and no activity with glutamine, asparagine, alanine, histidine, leucine, methionine, lysine, arginine, tryptophan, tyrosine, phenylalanine or kynurenine. In Pinus pinaster (Maritime pine), this protein is Aspartate aminotransferase (AAT).